The sequence spans 451 residues: Potassium/sodium uptake protein NtpJ (451 aa).

Helical transmembrane passes span 18-38 (IAAG…LPFF), 46-66 (HFID…LTTL), 78-98 (FLIM…PILF), 133-153 (ILKF…VVFI), 162-182 (IWFS…DLLG), 192-212 (VYLI…FIVW), 230-250 (VALS…LITE), 293-313 (LILT…AGGL), 350-370 (ALTL…VLSV), 380-400 (IEYI…TMGL), and 410-430 (LVII…VFSL).

Belongs to the TrkH potassium transport family.

The protein resides in the cell membrane. Mediates electrogenic transport of potassium as well as sodium. Acts probably as a potassium-sodium cotransporter. Major sodium reentry pathway at high pH values. The chain is Potassium/sodium uptake protein NtpJ (ntpJ) from Enterococcus hirae (strain ATCC 9790 / DSM 20160 / JCM 8729 / LMG 6399 / NBRC 3181 / NCIMB 6459 / NCDO 1258 / NCTC 12367 / WDCM 00089 / R).